We begin with the raw amino-acid sequence, 100 residues long: NADH-quinone oxidoreductase subunit K (100 aa).

A run of 3 helical transmembrane segments spans residues Leu4–Ile24, Ile29–Ile49, and Val60–Phe80.

The protein belongs to the complex I subunit 4L family. In terms of assembly, NDH-1 is composed of 13 different subunits. Subunits NuoA, H, J, K, L, M, N constitute the membrane sector of the complex.

The protein resides in the cell membrane. It catalyses the reaction a quinone + NADH + 5 H(+)(in) = a quinol + NAD(+) + 4 H(+)(out). Its function is as follows. NDH-1 shuttles electrons from NADH, via FMN and iron-sulfur (Fe-S) centers, to quinones in the respiratory chain. The immediate electron acceptor for the enzyme in this species is believed to be ubiquinone. Couples the redox reaction to proton translocation (for every two electrons transferred, four hydrogen ions are translocated across the cytoplasmic membrane), and thus conserves the redox energy in a proton gradient. The chain is NADH-quinone oxidoreductase subunit K from Buchnera aphidicola subsp. Cinara cedri (strain Cc).